We begin with the raw amino-acid sequence, 221 residues long: Oxaloacetate tautomerase FAHD1, mitochondrial (221 aa).

The N-terminal 24 residues, 1-24 (MAASRPLSRFWEWGKNIVCVGRNY), are a transit peptide targeting the mitochondrion. R22 provides a ligand contact to oxalate. S37 carries the post-translational modification Phosphoserine. Residues E68, E70, and D99 each contribute to the Mg(2+) site. At K110 the chain carries N6-acetyllysine. Residue K112 is modified to N6-succinyllysine. Oxalate-binding residues include K120 and T189.

The protein belongs to the FAH family. As to quaternary structure, homodimer. Requires Mg(2+) as cofactor. Mn(2+) serves as cofactor. Ubiquitous (at protein level).

Its subcellular location is the mitochondrion. The protein resides in the cytoplasm. It localises to the cytosol. The enzyme catalyses oxaloacetate = enol-oxaloacetate. It catalyses the reaction oxaloacetate + H(+) = pyruvate + CO2. The catalysed reaction is a 3-acylpyruvate + H2O = a carboxylate + pyruvate + H(+). It carries out the reaction acetylpyruvate + H2O = acetate + pyruvate + H(+). The enzyme catalyses 3-fumarylpyruvate + H2O = fumarate + pyruvate + H(+). With respect to regulation, oxaloacetate decarboxylation is competitively inhibited by oxalate. In terms of biological role, tautomerase that converts enol-oxaloacetate, a strong inhibitor of succinate dehydrogenase, to the physiological keto form of oxaloacetate. It is thereby required to maximize aerobic respiration efficiency by preventing succinate dehydrogenase inhibition. Also acts as a weak oxaloacetate decarboxylase (ODx), catalyzing the decarboxylation of oxaloacetate (OAA) to pyruvate and CO(2), and as such is likely a regulatory enzyme in the TCA cycle. Also displays acylpyruvase activity, being able to hydrolyze acetylpyruvate and fumarylpyruvate in vitro. Exhibits only a weak hydrolase activity on methylacetopyruvate and acetylacetone, and no activity toward acetoacetyl-CoA. The protein is Oxaloacetate tautomerase FAHD1, mitochondrial of Homo sapiens (Human).